We begin with the raw amino-acid sequence, 264 residues long: Zinc finger protein CG30 (264 aa).

The segment at 8–63 (CNICFSVAEIKNYFLQPIDRLTIIPVLELDTCKHQLCSMCIRKIRKRKKVPCPLCR) adopts an RING-type zinc-finger fold.

It localises to the host nucleus. In terms of biological role, plays a role in the proper expression of late and very late genes. This chain is Zinc finger protein CG30 (CG30), found in Autographa californica nuclear polyhedrosis virus (AcMNPV).